We begin with the raw amino-acid sequence, 373 residues long: 3-dehydroquinate synthase (373 aa).

NAD(+)-binding positions include 67-72 (EGEETK), 101-105 (GVILD), 125-126 (TT), Lys138, and Lys147. Positions 180, 240, and 256 each coordinate Zn(2+).

This sequence belongs to the sugar phosphate cyclases superfamily. Dehydroquinate synthase family. Requires NAD(+) as cofactor. The cofactor is Co(2+). Zn(2+) is required as a cofactor.

It is found in the cytoplasm. The enzyme catalyses 7-phospho-2-dehydro-3-deoxy-D-arabino-heptonate = 3-dehydroquinate + phosphate. Its pathway is metabolic intermediate biosynthesis; chorismate biosynthesis; chorismate from D-erythrose 4-phosphate and phosphoenolpyruvate: step 2/7. Catalyzes the conversion of 3-deoxy-D-arabino-heptulosonate 7-phosphate (DAHP) to dehydroquinate (DHQ). The chain is 3-dehydroquinate synthase from Chlamydia trachomatis serovar A (strain ATCC VR-571B / DSM 19440 / HAR-13).